The primary structure comprises 132 residues: Sodium/calcium exchanger regulatory protein 1 (132 aa).

Positions 126 and 128 each coordinate (9Z)-hexadecenoate.

Belongs to the calycin superfamily. Fatty-acid binding protein (FABP) family. Interacts with Na(+)/Ca(2+) exchanger NCXSQ1; ReP1-NCXSQ phosphorylation does not affect the interaction. Post-translationally, phosphorylated. Phosphorylation may result in the release of the bound fatty acid. Expressed in the optic nerve (at protein level).

Its subcellular location is the cytoplasm. The protein localises to the membrane. Functionally, binds and may transport fatty acids such as palmitoleate. Also binds poly-phosphoinositides including phosphatidylinositol 4-phosphate (PtdIns(4)P), phosphatidylinositol 4,5-bisphosphate (PtdIns(4,5)P2) and phosphatidylinositol 3,4,5-trisphosphate (PtdIns(3,4,5)P3), and phosphatidic acid. When phosphorylated, stimulates the activity of optic nerve Na(+)/Ca(2+) exchanger. This chain is Sodium/calcium exchanger regulatory protein 1, found in Doryteuthis pealeii (Longfin inshore squid).